The chain runs to 214 residues: Cytochrome b (214 aa).

4 helical membrane passes run F31 to I51, W75 to I96, W111 to L131, and F176 to L196. 2 residues coordinate heme b: H81 and H95. H180 and H194 together coordinate heme b. A ubiquinone is bound at residue H199.

The protein belongs to the cytochrome b family. As to quaternary structure, the cytochrome bc1 complex contains 3 respiratory subunits (MT-CYB, CYC1 and UQCRFS1), 2 core proteins (UQCRC1 and UQCRC2) and probably 6 low-molecular weight proteins. Heme b serves as cofactor.

It is found in the mitochondrion inner membrane. In terms of biological role, component of the ubiquinol-cytochrome c reductase complex (complex III or cytochrome b-c1 complex) that is part of the mitochondrial respiratory chain. The b-c1 complex mediates electron transfer from ubiquinol to cytochrome c. Contributes to the generation of a proton gradient across the mitochondrial membrane that is then used for ATP synthesis. This Bothrops bilineatus (Green jararaca) protein is Cytochrome b (MT-CYB).